Consider the following 110-residue polypeptide: NAD(P)H-quinone oxidoreductase subunit M (110 aa).

The protein belongs to the complex I NdhM subunit family. NDH-1 can be composed of about 15 different subunits; different subcomplexes with different compositions have been identified which probably have different functions.

It localises to the cellular thylakoid membrane. The enzyme catalyses a plastoquinone + NADH + (n+1) H(+)(in) = a plastoquinol + NAD(+) + n H(+)(out). It carries out the reaction a plastoquinone + NADPH + (n+1) H(+)(in) = a plastoquinol + NADP(+) + n H(+)(out). NDH-1 shuttles electrons from an unknown electron donor, via FMN and iron-sulfur (Fe-S) centers, to quinones in the respiratory and/or the photosynthetic chain. The immediate electron acceptor for the enzyme in this species is believed to be plastoquinone. Couples the redox reaction to proton translocation, and thus conserves the redox energy in a proton gradient. Cyanobacterial NDH-1 also plays a role in inorganic carbon-concentration. In Synechococcus elongatus (strain ATCC 33912 / PCC 7942 / FACHB-805) (Anacystis nidulans R2), this protein is NAD(P)H-quinone oxidoreductase subunit M.